The following is a 258-amino-acid chain: Lipoprotein-releasing system ATP-binding protein LolD (258 aa).

In terms of domain architecture, ABC transporter spans 5–244 (LQCCQLSKSY…PTSSITDPAN (240 aa)). Position 41-48 (41-48 (GSSGCGKS)) interacts with ATP. The segment at 222–258 (LRPLSDNSEQALPPTSSITDPANNIKDNEPQANERHV) is disordered. Residues 226-243 (SDNSEQALPPTSSITDPA) show a composition bias toward polar residues. Residues 247 to 258 (KDNEPQANERHV) show a composition bias toward basic and acidic residues.

Belongs to the ABC transporter superfamily. Lipoprotein translocase (TC 3.A.1.125) family. The complex is composed of two ATP-binding proteins (LolD) and two transmembrane proteins (LolC and LolE).

The protein resides in the cell inner membrane. In terms of biological role, part of the ABC transporter complex LolCDE involved in the translocation of mature outer membrane-directed lipoproteins, from the inner membrane to the periplasmic chaperone, LolA. Responsible for the formation of the LolA-lipoprotein complex in an ATP-dependent manner. This chain is Lipoprotein-releasing system ATP-binding protein LolD, found in Colwellia psychrerythraea (strain 34H / ATCC BAA-681) (Vibrio psychroerythus).